Consider the following 222-residue polypeptide: Large ribosomal subunit protein uL4 (222 aa).

The segment at 50-72 (TRGRSEVSHSTRKPFRQKGTGNA) is disordered.

Belongs to the universal ribosomal protein uL4 family. Part of the 50S ribosomal subunit.

One of the primary rRNA binding proteins, this protein initially binds near the 5'-end of the 23S rRNA. It is important during the early stages of 50S assembly. It makes multiple contacts with different domains of the 23S rRNA in the assembled 50S subunit and ribosome. Its function is as follows. Forms part of the polypeptide exit tunnel. This chain is Large ribosomal subunit protein uL4, found in Chlamydia muridarum (strain MoPn / Nigg).